We begin with the raw amino-acid sequence, 437 residues long: Ribosomal protein uS12 methylthiotransferase RimO (437 aa).

In terms of domain architecture, MTTase N-terminal spans 4–114 (PRVSFVSLGC…VMAAVHEAAP (111 aa)). [4Fe-4S] cluster is bound by residues C13, C49, C78, C145, C149, and C152. The 239-residue stretch at 131-369 (LTPRHYAYLK…MQRQQKISAT (239 aa)) folds into the Radical SAM core domain. In terms of domain architecture, TRAM spans 372–437 (AKKVGKRLPV…DAYDLYGSAV (66 aa)).

It belongs to the methylthiotransferase family. RimO subfamily. [4Fe-4S] cluster serves as cofactor.

It localises to the cytoplasm. It catalyses the reaction L-aspartate(89)-[ribosomal protein uS12]-hydrogen + (sulfur carrier)-SH + AH2 + 2 S-adenosyl-L-methionine = 3-methylsulfanyl-L-aspartate(89)-[ribosomal protein uS12]-hydrogen + (sulfur carrier)-H + 5'-deoxyadenosine + L-methionine + A + S-adenosyl-L-homocysteine + 2 H(+). In terms of biological role, catalyzes the methylthiolation of an aspartic acid residue of ribosomal protein uS12. The chain is Ribosomal protein uS12 methylthiotransferase RimO from Mesorhizobium japonicum (strain LMG 29417 / CECT 9101 / MAFF 303099) (Mesorhizobium loti (strain MAFF 303099)).